The following is a 332-amino-acid chain: CMRF35-like molecule 9 (332 aa).

Residues 1-18 (MRLLVLLWGCLLLPGYEA) form the signal peptide. The Ig-like V-type domain maps to 19 to 121 (LEGPEEISGF…RGPDESLLIS (103 aa)). Topologically, residues 19–247 (LEGPEEISGF…KPRVSIPMVR (229 aa)) are extracellular. Residues C37 and C107 are joined by a disulfide bond. N96 carries an N-linked (GlcNAc...) asparagine glycan. T137, T143, T144, T155, T161, T170, T171, T177, T187, and T195 each carry an O-linked (GalNAc...) threonine glycan. Residues 146-239 (LQPKAKAQQT…PALSSGSSKP (94 aa)) form a disordered region. A compositionally biased stretch (low complexity) spans 147 to 158 (QPKAKAQQTQPP). Over residues 168-181 (AATTAKQGKTGAEA) the composition is skewed to low complexity. Over residues 186 to 205 (GTSQYGHERTSQYTGTSPHP) the composition is skewed to polar residues. A glycan (O-linked (GalNAc...) serine) is linked at S196. O-linked (GalNAc...) threonine glycans are attached at residues T199 and T201. A glycan (O-linked (GalNAc...) serine) is linked at S202. An O-linked (GalNAc...) threonine glycan is attached at T207. Residues S208, S213, S214, and S222 are each glycosylated (O-linked (GalNAc...) serine). Residues 220 to 239 (LDSTSAEDTSPALSSGSSKP) show a composition bias toward polar residues. A glycan (O-linked (GalNAc...) threonine) is linked at T223. The O-linked (GalNAc...) serine glycan is linked to S224. Residue T228 is glycosylated (O-linked (GalNAc...) threonine). O-linked (GalNAc...) serine glycans are attached at residues S229 and S237. Residues 248–268 (ILAPVLVLLSLLSAAGLIAFC) form a helical membrane-spanning segment. Topologically, residues 269–332 (SHLLLWRKEA…ELGFSKFVSA (64 aa)) are cytoplasmic.

It belongs to the CD300 family. O-glycosylated with sialylated oligosaccharides. Highly expressed in heart, skeletal muscle and placenta.

Its subcellular location is the apical cell membrane. It localises to the basolateral cell membrane. The protein resides in the endosome. It is found in the multivesicular body membrane. In terms of biological role, receptor which may mediate L-selectin-dependent lymphocyte rollings. Binds SELL in a calcium dependent manner. Binds lymphocyte. The polypeptide is CMRF35-like molecule 9 (CD300LG) (Homo sapiens (Human)).